Consider the following 68-residue polypeptide: Large ribosomal subunit protein bL28 (68 aa).

The disordered stretch occupies residues 1–30 (MAKICDHCGKKPQSGNNVSHANNKSKRRFE). Residues 13–22 (QSGNNVSHAN) show a composition bias toward polar residues.

Belongs to the bacterial ribosomal protein bL28 family.

The chain is Large ribosomal subunit protein bL28 from Solidesulfovibrio magneticus (strain ATCC 700980 / DSM 13731 / RS-1) (Desulfovibrio magneticus).